The chain runs to 438 residues: GTPase Der (438 aa).

EngA-type G domains follow at residues 3–168 (PLIA…PCPE) and 179–354 (IKLA…INRR). GTP-binding positions include 9–16 (GRPNVGKS), 56–60 (DTGGY), 120–123 (NKVD), 185–192 (GRPNVGKS), 232–236 (DTAGL), and 297–300 (NKWD). One can recognise a KH-like domain in the interval 355 to 438 (QKISTSNLNR…LPITMRFLRK (84 aa)).

It belongs to the TRAFAC class TrmE-Era-EngA-EngB-Septin-like GTPase superfamily. EngA (Der) GTPase family. In terms of assembly, associates with the 50S ribosomal subunit.

In terms of biological role, GTPase that plays an essential role in the late steps of ribosome biogenesis. The polypeptide is GTPase Der (Chlorobaculum parvum (strain DSM 263 / NCIMB 8327) (Chlorobium vibrioforme subsp. thiosulfatophilum)).